A 363-amino-acid chain; its full sequence is tRNA/tmRNA (uracil-C(5))-methyltransferase (363 aa).

Positions 187, 215, 220, 236, and 296 each coordinate S-adenosyl-L-methionine. Cys321 (nucleophile) is an active-site residue. Residue Glu355 is the Proton acceptor of the active site.

Belongs to the class I-like SAM-binding methyltransferase superfamily. RNA M5U methyltransferase family. TrmA subfamily.

The enzyme catalyses uridine(54) in tRNA + S-adenosyl-L-methionine = 5-methyluridine(54) in tRNA + S-adenosyl-L-homocysteine + H(+). It carries out the reaction uridine(341) in tmRNA + S-adenosyl-L-methionine = 5-methyluridine(341) in tmRNA + S-adenosyl-L-homocysteine + H(+). Dual-specificity methyltransferase that catalyzes the formation of 5-methyluridine at position 54 (m5U54) in all tRNAs, and that of position 341 (m5U341) in tmRNA (transfer-mRNA). The protein is tRNA/tmRNA (uracil-C(5))-methyltransferase of Pseudomonas aeruginosa (strain UCBPP-PA14).